Reading from the N-terminus, the 195-residue chain is Phosphoheptose isomerase (195 aa).

The 161-residue stretch at 35–195 (IVSKILQAGN…IVEYNLFKME (161 aa)) folds into the SIS domain. 51-53 (NGG) contributes to the substrate binding site. Residues His-60 and Glu-64 each coordinate Zn(2+). Residues Glu-64, 95–96 (ND), 121–123 (STS), Ser-126, and Gln-173 each bind substrate. Residues Gln-173 and His-181 each contribute to the Zn(2+) site.

The protein belongs to the SIS family. GmhA subfamily. The cofactor is Zn(2+).

It localises to the cytoplasm. The enzyme catalyses 2 D-sedoheptulose 7-phosphate = D-glycero-alpha-D-manno-heptose 7-phosphate + D-glycero-beta-D-manno-heptose 7-phosphate. Its pathway is carbohydrate biosynthesis; D-glycero-D-manno-heptose 7-phosphate biosynthesis; D-glycero-alpha-D-manno-heptose 7-phosphate and D-glycero-beta-D-manno-heptose 7-phosphate from sedoheptulose 7-phosphate: step 1/1. In terms of biological role, catalyzes the isomerization of sedoheptulose 7-phosphate in D-glycero-D-manno-heptose 7-phosphate. This chain is Phosphoheptose isomerase, found in Leptospira interrogans serogroup Icterohaemorrhagiae serovar copenhageni (strain Fiocruz L1-130).